Consider the following 277-residue polypeptide: Lectin 1 (277 aa).

Residues 1-30 (MSFSSSNFYVILSISLTVFILLFNINKVNS) form the signal peptide. Asn143 carries N-linked (GlcNAc...) asparagine glycosylation. Mn(2+)-binding residues include Glu152 and Asp154. Residues Asp154, Asn158, and Asp161 each coordinate Ca(2+). Positions 161 and 167 each coordinate Mn(2+). N-linked (GlcNAc...) asparagine glycosylation is present at Asn269.

It belongs to the leguminous lectin family.

Its function is as follows. Lectin that may be involved in a cell recognition process. The chain is Lectin 1 (LEC1) from Medicago truncatula (Barrel medic).